We begin with the raw amino-acid sequence, 188 residues long: Adenine phosphoribosyltransferase (188 aa).

Belongs to the purine/pyrimidine phosphoribosyltransferase family. Homodimer.

It localises to the cytoplasm. The catalysed reaction is AMP + diphosphate = 5-phospho-alpha-D-ribose 1-diphosphate + adenine. Its pathway is purine metabolism; AMP biosynthesis via salvage pathway; AMP from adenine: step 1/1. Functionally, catalyzes a salvage reaction resulting in the formation of AMP, that is energically less costly than de novo synthesis. The polypeptide is Adenine phosphoribosyltransferase (Burkholderia thailandensis (strain ATCC 700388 / DSM 13276 / CCUG 48851 / CIP 106301 / E264)).